We begin with the raw amino-acid sequence, 71 residues long: Large ribosomal subunit protein bL31 (71 aa).

The Zn(2+) site is built by Cys-16, Cys-18, Cys-37, and Cys-40.

This sequence belongs to the bacterial ribosomal protein bL31 family. Type A subfamily. In terms of assembly, part of the 50S ribosomal subunit. Requires Zn(2+) as cofactor.

Its function is as follows. Binds the 23S rRNA. This Sodalis glossinidius (strain morsitans) protein is Large ribosomal subunit protein bL31.